The primary structure comprises 50 residues: Protein PsbN (50 aa).

A helical membrane pass occupies residues Ile14–Phe34.

It belongs to the PsbN family.

The protein resides in the cellular thylakoid membrane. In terms of biological role, may play a role in photosystem I and II biogenesis. This chain is Protein PsbN, found in Prochlorococcus marinus (strain MIT 9215).